A 90-amino-acid polypeptide reads, in one-letter code: Conotoxin ba9a (90 aa).

Positions 1-27 are cleaved as a signal peptide; sequence MHLSLARSAGLMWLLLFAVGNFVGVQP. Residues 28-62 constitute a propeptide that is removed on maturation; the sequence is GQITRDVDNGQLADNRRNLQSLRKPMTLFKSLNKR. A 4-carboxyglutamate modification is found at Glu67. 4-hydroxyproline is present on residues Pro76 and Pro80.

Expressed by the venom duct.

Its subcellular location is the secreted. The polypeptide is Conotoxin ba9a (Conus bayani (Bayan's cone)).